We begin with the raw amino-acid sequence, 205 residues long: Ras-related protein rab-6.1 (205 aa).

Residues 18–25 (GEQSVGKT), Thr43, 66–70 (DTAGQ), and 124–127 (NKTD) contribute to the GTP site. Residues Cys203 and Cys205 are each lipidated (S-geranylgeranyl cysteine). Residue Cys205 is modified to Cysteine methyl ester.

It belongs to the small GTPase superfamily. Rab family. In terms of assembly, interacts with GARP complex component vps-52. Highly expressed in body wall muscle, intestine, somatic gonad, distal tip cells, vulva, and neurons including AVB, AVD, RIG, and PVC (at protein level). Not expressed in AVA and RMDV neurons.

The protein resides in the cell membrane. It localises to the cell projection. The protein localises to the dendrite. Its subcellular location is the perikaryon. It is found in the golgi apparatus. The protein resides in the cytoplasmic vesicle. It localises to the secretory vesicle. In terms of biological role, the small GTPases Rab are key regulators of intracellular membrane trafficking, from the formation of transport vesicles to their fusion with membranes. Rabs cycle between an inactive GDP-bound form and an active GTP-bound form that is able to recruit to membranes different set of downstream effectors directly responsible for vesicle formation, movement, tethering and fusion. In its active GTP-bound form, acts redundantly with rab-6.2 (in its active GTP-bound form) to positively regulate the retrograde trafficking of cargo molecules from endosomes to Golgi structures. Required for the retrograde trafficking of glr-1, a subunit of AMPA-type glutamate receptors (AMPRs), out of early endosomes and into the Golgi compartment in neurons. Together with rab-6.2, promotes the retrograde trafficking of mig-14 from endosomes to Golgi structures in the intestine. In oocytes, in its active GTP-bound form, involved in the membrane fusion and exocytosis of secretory vesicles (cortical granules) to play a role in the remodeling of the embryo surface following fertilization. Recruits sep-1 to cortical granules (derived from the Golgi complex) for exocytosis during the oocyte-to-embryo transition. Required for seam cell division and alae formation. Promotes spontaneous reversals in locomotion. The sequence is that of Ras-related protein rab-6.1 from Caenorhabditis elegans.